The sequence spans 239 residues: MTKPTIAGNRTGRKLGQRVKKKKLKASSREWLHRHINDPYVQRAQLEGYRARAAFKLLEIDEKHQILKGARRIIDLGAAPGSWSQIAAKVTGSTEDDIRVAAIDFLEMAHLPGVTILQLDFLDPDAPQRLVDAVGGEPDLVMSDMAAPTTGHHRTDHLRTMHLCEVAAHFAIEVLAEGGHFLAKTFQGGTERDLLNLLKQNFRQVVHVKPGASRAESVEMFLLAKGFKGRNVEHGTISA.

5 residues coordinate S-adenosyl-L-methionine: Gly-81, Trp-83, Asp-104, Asp-120, and Asp-144. Catalysis depends on Lys-184, which acts as the Proton acceptor.

This sequence belongs to the class I-like SAM-binding methyltransferase superfamily. RNA methyltransferase RlmE family.

It localises to the cytoplasm. It catalyses the reaction uridine(2552) in 23S rRNA + S-adenosyl-L-methionine = 2'-O-methyluridine(2552) in 23S rRNA + S-adenosyl-L-homocysteine + H(+). Specifically methylates the uridine in position 2552 of 23S rRNA at the 2'-O position of the ribose in the fully assembled 50S ribosomal subunit. This Rhizobium rhizogenes (strain K84 / ATCC BAA-868) (Agrobacterium radiobacter) protein is Ribosomal RNA large subunit methyltransferase E.